A 456-amino-acid chain; its full sequence is MKLKILHFTSGNKLHIDNILKKLKSKLSEFEYQFYISLMEYDENASRTDMKVFYVPNIFVANWIKSNHLESIIDAFEEESNNGVRPEIHIKVKEKKENVKSLKNNKSMLYFNTNGLSLNPFYTFENFVVGKSNEYAYTIAKLVLQQQASAYNPVLLYGKSGLGKTHLLNAIGNDVKEKNKNVLYVTSEDFLNDYMDKIKRKTMDSFRDKYRKCDYLLIDDVQFFGGKEGIQEELLHTFNTLHNSQKQIVMTSDKPPKEIKGLEERLRTRFEWGAMAEITNPELETKIAIIKSKCEVNRIVLENEVIDYIASNIYGNIRQIEGILSTINAHINLSPESSSLKIAKNVLKNYQIEKLEGITLDNIIKVVSKELNIKPSEIVSKERNRKVTFARRAVIYLAHSLMINSMNIIAKELGMKDHSSVSKALKAIKKEIAENSTTRNIIEDMKSKIQQSLDSV.

A domain I, interacts with DnaA modulators region spans residues 1-83 (MKLKILHFTS…DAFEEESNNG (83 aa)). The tract at residues 83 to 116 (GVRPEIHIKVKEKKENVKSLKNNKSMLYFNTNGL) is domain II. The domain III, AAA+ region stretch occupies residues 117–331 (SLNPFYTFEN…GILSTINAHI (215 aa)). Gly161, Gly163, Lys164, and Thr165 together coordinate ATP. The tract at residues 332-456 (NLSPESSSLK…SKIQQSLDSV (125 aa)) is domain IV, binds dsDNA.

This sequence belongs to the DnaA family. In terms of assembly, oligomerizes as a right-handed, spiral filament on DNA at oriC.

It localises to the cytoplasm. Its function is as follows. Plays an essential role in the initiation and regulation of chromosomal replication. ATP-DnaA binds to the origin of replication (oriC) to initiate formation of the DNA replication initiation complex once per cell cycle. Binds the DnaA box (a 9 base pair repeat at the origin) and separates the double-stranded (ds)DNA. Forms a right-handed helical filament on oriC DNA; dsDNA binds to the exterior of the filament while single-stranded (ss)DNA is stabiized in the filament's interior. The ATP-DnaA-oriC complex binds and stabilizes one strand of the AT-rich DNA unwinding element (DUE), permitting loading of DNA polymerase. After initiation quickly degrades to an ADP-DnaA complex that is not apt for DNA replication. Binds acidic phospholipids. This chain is Chromosomal replication initiator protein DnaA, found in Helicobacter hepaticus (strain ATCC 51449 / 3B1).